The chain runs to 191 residues: Peptidyl-tRNA hydrolase (191 aa).

Tyr-14 is a tRNA binding site. His-19 acts as the Proton acceptor in catalysis. The tRNA site is built by Phe-64, Asn-66, and Asn-113.

Belongs to the PTH family. In terms of assembly, monomer.

It is found in the cytoplasm. The catalysed reaction is an N-acyl-L-alpha-aminoacyl-tRNA + H2O = an N-acyl-L-amino acid + a tRNA + H(+). Hydrolyzes ribosome-free peptidyl-tRNAs (with 1 or more amino acids incorporated), which drop off the ribosome during protein synthesis, or as a result of ribosome stalling. In terms of biological role, catalyzes the release of premature peptidyl moieties from peptidyl-tRNA molecules trapped in stalled 50S ribosomal subunits, and thus maintains levels of free tRNAs and 50S ribosomes. The protein is Peptidyl-tRNA hydrolase of Fusobacterium nucleatum subsp. nucleatum (strain ATCC 25586 / DSM 15643 / BCRC 10681 / CIP 101130 / JCM 8532 / KCTC 2640 / LMG 13131 / VPI 4355).